The primary structure comprises 785 residues: DNA ligase (785 aa).

NAD(+) is bound by residues 32–36 (DAEYD), 81–82 (SL), and Glu-121. The N6-AMP-lysine intermediate role is filled by Lys-123. Residues Arg-144, Glu-181, Lys-294, and Lys-318 each contribute to the NAD(+) site. Zn(2+) is bound by residues Cys-412, Cys-415, Cys-442, and Cys-448. The region spanning 702–785 (VEGLPEAGHT…AFLAKHNIPV (84 aa)) is the BRCT domain.

It belongs to the NAD-dependent DNA ligase family. LigA subfamily. The cofactor is Mg(2+). Mn(2+) serves as cofactor.

The catalysed reaction is NAD(+) + (deoxyribonucleotide)n-3'-hydroxyl + 5'-phospho-(deoxyribonucleotide)m = (deoxyribonucleotide)n+m + AMP + beta-nicotinamide D-nucleotide.. DNA ligase that catalyzes the formation of phosphodiester linkages between 5'-phosphoryl and 3'-hydroxyl groups in double-stranded DNA using NAD as a coenzyme and as the energy source for the reaction. It is essential for DNA replication and repair of damaged DNA. The chain is DNA ligase from Pseudomonas fluorescens (strain SBW25).